The primary structure comprises 1975 residues: Golgi-specific brefeldin A-resistance guanine nucleotide exchange factor 1 homolog (1975 aa).

Disordered regions lie at residues 216 to 243 (NPTEKRQKRKKKRQLSVHIETKAKEPEN) and 299 to 352 (ISAG…EEKM). The segment covering 221–230 (RQKRKKKRQL) has biased composition (basic residues). Positions 624 to 812 (QIIEQKKRKR…ADMYQAIKTE (189 aa)) constitute an SEC7 domain. Residues 1264–1277 (QSLRVGGDQQQQRM) show a composition bias toward polar residues. Disordered stretches follow at residues 1264-1318 (QSLR…DLES), 1447-1473 (DEKAVKKHHHHHHGHKKKELCTDVTED), 1699-1751 (IKDT…ATAQ), 1788-1854 (VHSG…QYAY), and 1877-1975 (YANQ…QEKP). Basic and acidic residues predominate over residues 1291 to 1309 (GAHEERAYTSEGEERRRGG). A compositionally biased stretch (basic residues) spans 1451-1464 (VKKHHHHHHGHKKK). A compositionally biased stretch (low complexity) spans 1734–1751 (SNSTAATSTSDPSIATAQ). Over residues 1797-1808 (GSPPQTEPPASS) the composition is skewed to pro residues. Low complexity-rich tracts occupy residues 1820-1854 (YEQYRQQQAAAAQQYQQYNQNYPQQQQQQQQQYAY) and 1877-1894 (YANQYQHYQQQQQQQQQH). Residues 1895–1909 (PVNPTSPSVHGQYSV) show a composition bias toward polar residues. Residues 1938 to 1957 (TPPQNNAPALAPSAPTTTSA) are compositionally biased toward low complexity.

The protein localises to the golgi apparatus. Its subcellular location is the cis-Golgi network. It localises to the endoplasmic reticulum-Golgi intermediate compartment. In terms of biological role, guanine-nucleotide exchange factor (GEF) for members of the Arf family of small GTPases involved in trafficking in the early secretory pathway; its GEF activity initiates the coating of nascent vesicles via the localized generation of activated ARFs through replacement of GDP with GTP. Also, plays a role in receptor-mediated endocytosis in oocytes and endosomal trafficking. Involved in vesicle retrograde transport from the ERGIC and cis-Golgi compartments to the endoplasmic reticulum (ER). Plays a role in maintaining mitochondrial morphology, network organization and function. May be required for the basolateral cell membrane localization of the serine threonine protein kinase sgk-1 in intestinal cells. This is Golgi-specific brefeldin A-resistance guanine nucleotide exchange factor 1 homolog from Caenorhabditis elegans.